The sequence spans 225 residues: E3 ubiquitin-protein ligase ATL76 (225 aa).

A helical membrane pass occupies residues 59 to 79; sequence LMLLSVLICGIICCLGLHYII. The RING-type; atypical zinc-finger motif lies at 135-177; sequence CVICLSDFVSGEQLRLLPKCNHGFHVRCIDKWLQHHLTCPKCR.

Belongs to the RING-type zinc finger family. ATL subfamily.

It is found in the membrane. The catalysed reaction is S-ubiquitinyl-[E2 ubiquitin-conjugating enzyme]-L-cysteine + [acceptor protein]-L-lysine = [E2 ubiquitin-conjugating enzyme]-L-cysteine + N(6)-ubiquitinyl-[acceptor protein]-L-lysine.. It participates in protein modification; protein ubiquitination. Its function is as follows. E3 ubiquitin-protein ligase able to catalyze polyubiquitination with ubiquitin-conjugating enzyme E2 UBC8 in vitro. The protein is E3 ubiquitin-protein ligase ATL76 (ATL76) of Arabidopsis thaliana (Mouse-ear cress).